The primary structure comprises 158 residues: 2-C-methyl-D-erythritol 2,4-cyclodiphosphate synthase (158 aa).

A divalent metal cation contacts are provided by aspartate 9 and histidine 11. 4-CDP-2-C-methyl-D-erythritol 2-phosphate contacts are provided by residues 9 to 11 (DVH) and 35 to 36 (HS). An a divalent metal cation-binding site is contributed by histidine 43. Residues 57–59 (DIG), 62–66 (FPDTD), 101–107 (AQAPKMA), 133–136 (TTTE), phenylalanine 140, and arginine 143 each bind 4-CDP-2-C-methyl-D-erythritol 2-phosphate.

This sequence belongs to the IspF family. Homotrimer. Requires a divalent metal cation as cofactor.

It catalyses the reaction 4-CDP-2-C-methyl-D-erythritol 2-phosphate = 2-C-methyl-D-erythritol 2,4-cyclic diphosphate + CMP. It functions in the pathway isoprenoid biosynthesis; isopentenyl diphosphate biosynthesis via DXP pathway; isopentenyl diphosphate from 1-deoxy-D-xylulose 5-phosphate: step 4/6. In terms of biological role, involved in the biosynthesis of isopentenyl diphosphate (IPP) and dimethylallyl diphosphate (DMAPP), two major building blocks of isoprenoid compounds. Catalyzes the conversion of 4-diphosphocytidyl-2-C-methyl-D-erythritol 2-phosphate (CDP-ME2P) to 2-C-methyl-D-erythritol 2,4-cyclodiphosphate (ME-CPP) with a corresponding release of cytidine 5-monophosphate (CMP). This is 2-C-methyl-D-erythritol 2,4-cyclodiphosphate synthase from Vibrio vulnificus (strain CMCP6).